Consider the following 95-residue polypeptide: MNIRPLRDRIIVERIEEETTTAGGLIIPDSAKEKPQQGIVKAVGKGKVLEDGTVLPMDIKVGDRVLFGKYAGSEIKIDGLEYQIMREDDILGVLE.

This sequence belongs to the GroES chaperonin family. Heptamer of 7 subunits arranged in a ring. Interacts with the chaperonin GroEL.

The protein resides in the cytoplasm. Functionally, together with the chaperonin GroEL, plays an essential role in assisting protein folding. The GroEL-GroES system forms a nano-cage that allows encapsulation of the non-native substrate proteins and provides a physical environment optimized to promote and accelerate protein folding. GroES binds to the apical surface of the GroEL ring, thereby capping the opening of the GroEL channel. The chain is Co-chaperonin GroES from Syntrophotalea carbinolica (strain DSM 2380 / NBRC 103641 / GraBd1) (Pelobacter carbinolicus).